Here is a 100-residue protein sequence, read N- to C-terminus: Urease subunit gamma (100 aa).

This sequence belongs to the urease gamma subunit family. Heterotrimer of UreA (gamma), UreB (beta) and UreC (alpha) subunits. Three heterotrimers associate to form the active enzyme.

The protein localises to the cytoplasm. It carries out the reaction urea + 2 H2O + H(+) = hydrogencarbonate + 2 NH4(+). The protein operates within nitrogen metabolism; urea degradation; CO(2) and NH(3) from urea (urease route): step 1/1. The chain is Urease subunit gamma from Pseudomonas syringae pv. syringae (strain B728a).